A 389-amino-acid chain; its full sequence is Na(+)/H(+) antiporter NhaA 1 (389 aa).

The next 12 helical transmembrane spans lie at 12–32 (VLNE…ALLV), 62–82 (FLLW…GLEL), 97–117 (IVLP…LFVL), 128–148 (GWAI…MMCG), 157–177 (IFLL…IAIF), 184–204 (IVAF…NILG), 220–240 (ISVL…AFFI), 260–280 (FWLA…VNLS), 282–302 (IDIG…LFVG), 305–325 (AGVF…LPQG), 331–351 (LYGV…IDGL), and 365–385 (LAIL…LKFF).

The protein belongs to the NhaA Na(+)/H(+) (TC 2.A.33) antiporter family.

The protein resides in the cell inner membrane. It carries out the reaction Na(+)(in) + 2 H(+)(out) = Na(+)(out) + 2 H(+)(in). In terms of biological role, na(+)/H(+) antiporter that extrudes sodium in exchange for external protons. This is Na(+)/H(+) antiporter NhaA 1 from Campylobacter jejuni subsp. jejuni serotype O:23/36 (strain 81-176).